A 22-amino-acid polypeptide reads, in one-letter code: Cysteine-rich venom protein collettin-a (22 aa).

Residues 1–15 are compositionally biased toward basic and acidic residues; the sequence is SNKKNYQKEIVDKHN. Residues 1-22 form a disordered region; that stretch reads SNKKNYQKEIVDKHNALRRSVK.

This sequence belongs to the CRISP family. In terms of processing, contains 8 disulfide bonds. As to expression, expressed by the venom gland.

It is found in the secreted. The sequence is that of Cysteine-rich venom protein collettin-a from Pseudechis colletti (Collett's snake).